The sequence spans 873 residues: Zinc finger X-linked protein ZXDB (873 aa).

Disordered stretches follow at residues 1–23 (MEIPRLLPARGTPQGAGGGGCPA), 48–120 (RGAQ…GGSR), 138–184 (VETV…LSAV), 240–259 (EPGVAPFPQPQPPPQPGALI), and 301–330 (AEPAACPAPPEEEAEAPAAAAAQSPRGPAG). Composition is skewed to gly residues over residues 14–23 (QGAGGGGCPA) and 85–120 (SGGGRGGGAGGGGGGSGGGGGGGGGGGGGGGGGGSR). An Omega-N-methylarginine modification is found at arginine 89. Over residues 150-165 (VRREEAGAGPRPERRQ) the composition is skewed to basic and acidic residues. The segment covering 240 to 255 (EPGVAPFPQPQPPPQP) has biased composition (pro residues). Residues 316-327 (APAAAAAQSPRG) show a composition bias toward low complexity. 10 C2H2-type zinc fingers span residues 340–364 (YLCPEAQCGQTFAKKHQLKVHLLTH), 373–397 (FKCPLSGCGWTFTTSYKLKRHLQSH), 403–427 (FGCPVQGCGKSFTTVYNLKAHMKGH), 433–455 (FKCEVCEESFPTQAKLSTHQRSH), 462–486 (YQCAFSGCKKTFITVSALFSHNRAH), 493–517 (FACSFPGCSKQYDKACRLKIHLRSH), 523–547 (FLCDFDGCGWNFTSMSKLLRHKRKH), 553–577 (FTCPVEGCGKSFTRAEHLKGHSITH), 583–607 (FVCPVEGCCARFSARSSLYIHSKKH), and 616–641 (SRCPVPTCNKLFTSKHSMKTHMTKRH). A required for interaction with ZXDC region spans residues 340-646 (YLCPEAQCGQ…MTKRHNLSQD (307 aa)). A required for transcriptional activation region spans residues 645–776 (QDLLAQLEAA…DMDDVSAGNV (132 aa)).

The protein belongs to the ZXD family. In terms of assembly, self-associates. Interacts with ZXDC and CIITA.

It is found in the nucleus. Functionally, cooperates with CIITA to promote transcription of MHC class I and MHC class II genes. This is Zinc finger X-linked protein ZXDB (Zxdb) from Mus musculus (Mouse).